A 125-amino-acid chain; its full sequence is MSFLRPTLALLAVTALVTTSGQLNGYSKKEVTPEDTELLQKAQSNVSAYNSDVTSRICYLKVDSLETQVVSGENYKFHVSGCSVNSDKELGGCANQNCESSKYDIVIYSQSWTNTLKVTSITPAN.

Residues 1–21 (MSFLRPTLALLAVTALVTTSG) form the signal peptide. The N-linked (GlcNAc...) asparagine glycan is linked to asparagine 45. A Secondary area of contact motif is present at residues 68-72 (QVVSG).

This sequence belongs to the cystatin family. As to quaternary structure, interacts with the host papain-like cysteine protease PIP1. Interacts with the host papain-like cysteine protease RCR3. Interacts with the host papain-like cysteine protease C14.

It is found in the secreted. Secreted effector that interacts with and inhibits the pathogenesis-related papain-like cysteine proteases C14, PIP1 and RCR3 of host plants. Inhibition of host proteases by a pathogen extracellular protease inhibitor forms a specific type of defense-counterdefense mechanism between plants and microbial pathogens. The polypeptide is Cystatin-like cysteine protease inhibitor EPIC2B (Phytophthora infestans (Potato late blight agent)).